Consider the following 334-residue polypeptide: Fructose-1,6-bisphosphatase class 1 (334 aa).

4 residues coordinate Mg(2+): Glu-91, Asp-113, Leu-115, and Asp-116. Substrate contacts are provided by residues 116–119 (DGSS), Asn-208, and Lys-274. Glu-280 contacts Mg(2+).

This sequence belongs to the FBPase class 1 family. Homotetramer. The cofactor is Mg(2+).

The protein resides in the cytoplasm. The catalysed reaction is beta-D-fructose 1,6-bisphosphate + H2O = beta-D-fructose 6-phosphate + phosphate. Its pathway is carbohydrate biosynthesis; gluconeogenesis. This Herminiimonas arsenicoxydans protein is Fructose-1,6-bisphosphatase class 1.